Reading from the N-terminus, the 323-residue chain is Sphingolipid delta(4)-desaturase/C4-monooxygenase DES2 (323 aa).

A lipid anchor (N-myristoyl glycine) is attached at Gly-2. Helical transmembrane passes span 45-65 (WTVTAMVLAQLLACWLAQGLA) and 68-88 (WLFFWAYAFGGCVNHSLTLAI). The Histidine box-1 signature appears at 89 to 93 (HDISH). The interval 95–99 (TAFGT) is required for C4-hydroxylase activity. Residues 128-132 (HVDHH) carry the Histidine box-2 motif. Residues 209 to 231 (MVYLLASSLLGLGLHPISGHFVA) form a helical membrane-spanning segment. Residues 259–263 (HMEHH) carry the Histidine box-3 motif.

It belongs to the fatty acid desaturase type 1 family. DEGS subfamily.

The protein resides in the endoplasmic reticulum membrane. It carries out the reaction a dihydroceramide + 2 Fe(II)-[cytochrome b5] + O2 + 2 H(+) = a phytoceramide + 2 Fe(III)-[cytochrome b5] + H2O. It catalyses the reaction an N-acylsphinganine + 2 Fe(II)-[cytochrome b5] + O2 + 2 H(+) = an N-acylsphing-4-enine + 2 Fe(III)-[cytochrome b5] + 2 H2O. The catalysed reaction is N-octanoylsphinganine + 2 Fe(II)-[cytochrome b5] + O2 + 2 H(+) = N-octanoyl-4-hydroxysphinganine + 2 Fe(III)-[cytochrome b5] + H2O. The enzyme catalyses an N-acylsphinganine + 2 Fe(II)-[cytochrome b5] + O2 + 2 H(+) = an N-acyl-(4R)-4-hydroxysphinganine + 2 Fe(III)-[cytochrome b5] + H2O. The protein operates within membrane lipid metabolism; sphingolipid biosynthesis. Bifunctional enzyme which acts both as a sphingolipid delta(4)-desaturase and a sphingolipid C4-monooxygenase. The polypeptide is Sphingolipid delta(4)-desaturase/C4-monooxygenase DES2 (Bos taurus (Bovine)).